The chain runs to 333 residues: tRNA dimethylallyltransferase (333 aa).

Residue glycine 16–threonine 23 coordinates ATP. Threonine 18–threonine 23 is a substrate binding site. 3 interaction with substrate tRNA regions span residues aspartate 41–leucine 44, glutamine 165–arginine 169, and arginine 253–arginine 258.

The protein belongs to the IPP transferase family. In terms of assembly, monomer. It depends on Mg(2+) as a cofactor.

It carries out the reaction adenosine(37) in tRNA + dimethylallyl diphosphate = N(6)-dimethylallyladenosine(37) in tRNA + diphosphate. Functionally, catalyzes the transfer of a dimethylallyl group onto the adenine at position 37 in tRNAs that read codons beginning with uridine, leading to the formation of N6-(dimethylallyl)adenosine (i(6)A). The chain is tRNA dimethylallyltransferase from Polaromonas sp. (strain JS666 / ATCC BAA-500).